We begin with the raw amino-acid sequence, 238 residues long: Adenylate dimethylallyltransferase (238 aa).

It belongs to the isopentenyl transferase family.

The enzyme catalyses dimethylallyl diphosphate + AMP = N(6)-(dimethylallyl)adenosine 5'-phosphate + diphosphate. Its function is as follows. Transfers dimethylallyl groups to AMP as part of the biosynthesis of cytokinin phytohormones. In Ralstonia solanacearum (Pseudomonas solanacearum), this protein is Adenylate dimethylallyltransferase (tzs).